The following is a 251-amino-acid chain: MASIQANKRLTKEYKNIVNNPPPFIIAAPHEDNILEWHYVITGPPSTPYENGQYHGTLTFPSDYPFNPPAIRMITPNGRFKENTRLCLSMSDYHPEAWNPAWSVVTILNGLLSFMTGDEQTTGSVSTSDKDKRTLAKKSKHFNTYSNFKFKNMFPDLRESNIKDIEREAALEAESKGAQQEENKAQKLATEKATSLDDISDPEDRVRIQELIKAEKDKKDQDKNPGENSNIKSLLCLILAIAIFFVGLIMK.

Residues 1–229 (MASIQANKRL…DQDKNPGENS (229 aa)) lie on the Cytoplasmic side of the membrane. One can recognise a UBC core domain in the interval 5–154 (QANKRLTKEY…YSNFKFKNMF (150 aa)). The active-site Glycyl thioester intermediate is Cys87. Over residues 173-185 (AESKGAQQEENKA) the composition is skewed to basic and acidic residues. The segment at 173–200 (AESKGAQQEENKAQKLATEKATSLDDIS) is disordered. A helical transmembrane segment spans residues 230-250 (NIKSLLCLILAIAIFFVGLIM).

The protein belongs to the ubiquitin-conjugating enzyme family.

Its subcellular location is the endoplasmic reticulum membrane. The enzyme catalyses S-ubiquitinyl-[E1 ubiquitin-activating enzyme]-L-cysteine + [E2 ubiquitin-conjugating enzyme]-L-cysteine = [E1 ubiquitin-activating enzyme]-L-cysteine + S-ubiquitinyl-[E2 ubiquitin-conjugating enzyme]-L-cysteine.. The protein operates within protein modification; protein ubiquitination. In terms of biological role, catalyzes the covalent attachment of ubiquitin to other proteins. Functions in degradation of misfolded or regulated proteins localized in the endoplasmic reticulum (ER) lumen or membrane via the ubiquitin-proteasome system. Cognate E2 conjugating enzyme for the DOA10 ubiquitin ligase complex, which is part of the ERAD-C pathway responsible for the rapid degradation of membrane proteins with misfolded cytoplasmic domains. The sequence is that of Ubiquitin-conjugating enzyme E2 6 (UBC6) from Kluyveromyces lactis (strain ATCC 8585 / CBS 2359 / DSM 70799 / NBRC 1267 / NRRL Y-1140 / WM37) (Yeast).